The chain runs to 581 residues: Protein GAMETOPHYTE DEFECTIVE 1 (581 aa).

A compositionally biased stretch (polar residues) spans 452-467; it reads SMNIESTSEGGSMSPS. Residues 452 to 512 form a disordered region; that stretch reads SMNIESTSEG…TTGHASNDEM (61 aa). Over residues 496–512 the composition is skewed to basic and acidic residues; it reads ENSKERATTGHASNDEM.

Belongs to the eukaryotic/archaeal RNase P protein component 3 family. As to quaternary structure, probable component of nuclear RNase P and RNase MRP ribonucleoproteins. Interacts with POP5. As to expression, mostly expressed in inflorescence and roots, to a lower extent in leaves, and, at low levels, in siliques, seedlings and stems.

It is found in the nucleus. It localises to the nucleolus. The protein localises to the mitochondrion. Functionally, probable component of ribonuclease P, a ribonucleoprotein complex that generates mature tRNA molecules by cleaving their 5'-ends. May also be a component of the MRP ribonuclease complex, which cleaves pre-rRNA sequences. Required for female gametophyte development and male competence. This chain is Protein GAMETOPHYTE DEFECTIVE 1, found in Arabidopsis thaliana (Mouse-ear cress).